A 137-amino-acid polypeptide reads, in one-letter code: 2-iminobutanoate/2-iminopropanoate deaminase (137 aa).

Residue S2 is modified to N-acetylserine. Residues K13, K60, and K67 each carry the N6-succinyllysine modification. The residue at position 74 (T74) is a Phosphothreonine.

It belongs to the RutC family. As to quaternary structure, homotrimer. Interacts with YTHDF2. Liver and kidney.

It localises to the cytoplasm. Its subcellular location is the nucleus. The protein localises to the peroxisome. The protein resides in the mitochondrion. It carries out the reaction 2-iminobutanoate + H2O = 2-oxobutanoate + NH4(+). The enzyme catalyses 2-iminopropanoate + H2O = pyruvate + NH4(+). Catalyzes the hydrolytic deamination of enamine/imine intermediates that form during the course of normal metabolism. May facilitate the release of ammonia from these potentially toxic reactive metabolites, reducing their impact on cellular components. It may act on enamine/imine intermediates formed by several types of pyridoxal-5'-phosphate-dependent dehydratases including L-threonine dehydratase. Functionally, also promotes endoribonucleolytic cleavage of some transcripts by promoting recruitment of the ribonuclease P/MRP complex. Acts by bridging YTHDF2 and the ribonuclease P/MRP complex. RIDA/HRSP12 binds to N6-methyladenosine (m6A)-containing mRNAs containing a 5'-GGUUC-3' motif: cooperative binding of RIDA/HRSP12 and YTHDF2 to such transcripts lead to recruitment of the ribonuclease P/MRP complex and subsequent endoribonucleolytic cleavage. The sequence is that of 2-iminobutanoate/2-iminopropanoate deaminase from Rattus norvegicus (Rat).